A 291-amino-acid chain; its full sequence is ATP synthase gamma chain (291 aa).

It belongs to the ATPase gamma chain family. In terms of assembly, F-type ATPases have 2 components, CF(1) - the catalytic core - and CF(0) - the membrane proton channel. CF(1) has five subunits: alpha(3), beta(3), gamma(1), delta(1), epsilon(1). CF(0) has three main subunits: a, b and c.

The protein localises to the cell membrane. Its function is as follows. Produces ATP from ADP in the presence of a proton gradient across the membrane. The gamma chain is believed to be important in regulating ATPase activity and the flow of protons through the CF(0) complex. This is ATP synthase gamma chain from Streptococcus pyogenes serotype M3 (strain ATCC BAA-595 / MGAS315).